Reading from the N-terminus, the 387-residue chain is Exodeoxyribonuclease 7 large subunit (387 aa).

The protein belongs to the XseA family. In terms of assembly, heterooligomer composed of large and small subunits.

It is found in the cytoplasm. The enzyme catalyses Exonucleolytic cleavage in either 5'- to 3'- or 3'- to 5'-direction to yield nucleoside 5'-phosphates.. Bidirectionally degrades single-stranded DNA into large acid-insoluble oligonucleotides, which are then degraded further into small acid-soluble oligonucleotides. The polypeptide is Exodeoxyribonuclease 7 large subunit (Synechococcus sp. (strain CC9902)).